Consider the following 241-residue polypeptide: Probable transcriptional regulatory protein Rpic_2388 (241 aa).

Belongs to the TACO1 family.

It is found in the cytoplasm. The protein is Probable transcriptional regulatory protein Rpic_2388 of Ralstonia pickettii (strain 12J).